We begin with the raw amino-acid sequence, 407 residues long: RNA-binding motif, single-stranded-interacting protein 2 (407 aa).

Position 1 is an N-acetylmethionine (methionine 1). The tract at residues 29 to 54 (QQMAPPSPSNSTPNSSSGSNGNDQLS) is disordered. Residues 37-50 (SNSTPNSSSGSNGN) show a composition bias toward low complexity. RRM domains are found at residues 56–129 (TNLY…MAKQ) and 135–220 (TNLY…FADG). Phosphoserine is present on serine 106. A Phosphothreonine modification is found at threonine 269. Phosphoserine occurs at positions 280 and 285.

It localises to the nucleus. The protein is RNA-binding motif, single-stranded-interacting protein 2 (RBMS2) of Homo sapiens (Human).